The following is a 278-amino-acid chain: 3-methyl-2-oxobutanoate hydroxymethyltransferase (278 aa).

Mg(2+) contacts are provided by aspartate 49 and aspartate 88. 3-methyl-2-oxobutanoate contacts are provided by residues 49–50 (DS), aspartate 88, and lysine 118. Mg(2+) is bound at residue glutamate 120. Glutamate 186 functions as the Proton acceptor in the catalytic mechanism.

It belongs to the PanB family. Homodecamer; pentamer of dimers. Mg(2+) serves as cofactor.

Its subcellular location is the cytoplasm. The catalysed reaction is 3-methyl-2-oxobutanoate + (6R)-5,10-methylene-5,6,7,8-tetrahydrofolate + H2O = 2-dehydropantoate + (6S)-5,6,7,8-tetrahydrofolate. Its pathway is cofactor biosynthesis; (R)-pantothenate biosynthesis; (R)-pantoate from 3-methyl-2-oxobutanoate: step 1/2. In terms of biological role, catalyzes the reversible reaction in which hydroxymethyl group from 5,10-methylenetetrahydrofolate is transferred onto alpha-ketoisovalerate to form ketopantoate. In Bordetella parapertussis (strain 12822 / ATCC BAA-587 / NCTC 13253), this protein is 3-methyl-2-oxobutanoate hydroxymethyltransferase.